The chain runs to 243 residues: MKNPQKLAITFLPLYVIPTYTLCIKALYKNTHAGLLFSFLGFVLNTPAMSISGPPTTFILYRLHGVRRVLHWTLPDHEQTLYAFTGGSRSMAVKTDARCDTMSGGMIVLQHTHTVTLLTIDCSTDFSSYAFTHRDFHLQDKPHATFAMPFMSWVGSDPTSQLYSNVGGVLSVITEDDLSMCISIVIYGLRVNRPDDQTTPTPTPHQYTSQRRQPETNCPSPQPAFFTSDDDVLSLILRDAANA.

Residues 193-226 (RPDDQTTPTPTPHQYTSQRRQPETNCPSPQPAFF) are disordered. The span at 205-219 (HQYTSQRRQPETNCP) shows a compositional bias: polar residues.

It belongs to the alphaherpesvirinae HHV-1 UL4 family.

The protein resides in the host nucleus. The sequence is that of Nuclear protein UL4 homolog from Varicella-zoster virus (strain Oka vaccine) (HHV-3).